We begin with the raw amino-acid sequence, 287 residues long: Pyridoxal kinase PdxY (287 aa).

Residues S9 and 44 to 45 contribute to the substrate site; that span reads MQ. 4 residues coordinate ATP: D111, A142, E147, and K180. D221 is a binding site for substrate.

The protein belongs to the pyridoxine kinase family. PdxY subfamily. As to quaternary structure, homodimer. Requires Mg(2+) as cofactor.

It catalyses the reaction pyridoxal + ATP = pyridoxal 5'-phosphate + ADP + H(+). It participates in cofactor metabolism; pyridoxal 5'-phosphate salvage; pyridoxal 5'-phosphate from pyridoxal: step 1/1. Its function is as follows. Pyridoxal kinase involved in the salvage pathway of pyridoxal 5'-phosphate (PLP). Catalyzes the phosphorylation of pyridoxal to PLP. In Burkholderia mallei (strain ATCC 23344), this protein is Pyridoxal kinase PdxY.